Consider the following 476-residue polypeptide: Protein PAL OF QUIRKY (476 aa).

The N-terminal stretch at 1 to 14 is a signal peptide; sequence MTTVSSAFATVAEG. Residues 204 to 256 form a disordered region; that stretch reads TRRTNSGTSGSGDGNGGICGQESMMLETNSSFGSTSSSVSSSNLPPIKSSGED. The span at 212 to 222 shows a compositional bias: gly residues; that stretch reads SGSGDGNGGIC. Residues 233 to 252 show a composition bias toward low complexity; it reads SSFGSTSSSVSSSNLPPIKS.

As to quaternary structure, homodimer. Interacts with QKY and SUB/SCM at the plasma membrane. In terms of tissue distribution, observed in seedlings, roots, shoots, leaves, stems, inflorescence and flowers.

It is found in the cell membrane. The protein resides in the endomembrane system. Its function is as follows. Collaboratively with SUB and QKY, regulates cell growth anisotropy during gynoecium development, thus linking together cell-cell communication and cellular growth. The protein is Protein PAL OF QUIRKY of Arabidopsis thaliana (Mouse-ear cress).